The following is a 1317-amino-acid chain: Immunoglobulin superfamily member 1 (1317 aa).

The first 20 residues, 1–20, serve as a signal peptide directing secretion; that stretch reads MMLRTFTLLLLCIWLNPGMT. Ig-like C2-type domains follow at residues 21-112, 114-211, 216-302, 311-398, and 400-481; these read SLAV…KILE, EAPG…KLVV, PKPT…SDIL, PKTW…ATYN, and VELM…HRSK. At 21-499 the chain is on the extracellular side; the sequence is SLAVESQPEL…GFLTWNSILN (479 aa). The N-linked (GlcNAc...) asparagine glycan is linked to Asn-43. Cys-48 and Cys-96 are disulfide-bonded. The cysteines at positions 238 and 286 are disulfide-linked. N-linked (GlcNAc...) asparagine glycosylation is found at Asn-328 and Asn-371. 2 disulfides stabilise this stretch: Cys-333-Cys-382 and Cys-422-Cys-465. The helical transmembrane segment at 500-520 threads the bilayer; the sequence is EAVRVSLTMQLASLLLLVVWI. Residues 521–531 lie on the Cytoplasmic side of the membrane; sequence RWKCRRLRLRE. Residues 532–552 form a helical membrane-spanning segment; that stretch reads AWLLGTAQGVAMLFILMALLC. The Extracellular portion of the chain corresponds to 553–1317; that stretch reads CGLCNGALTE…EVSVELTVPI (765 aa). Ig-like C2-type domains lie at 570–658, 659–753, 758–850, 854–938, 946–1041, 1046–1131, and 1142–1223; these read TPKP…ALEL, VGTD…ELVI, PKPF…LVVT, PKPT…SSLS, TDTF…ELIV, PKPS…NHSN, and PKPS…EPSD. Cys-780 and Cys-830 are joined by a disulfide. Asn-871 carries an N-linked (GlcNAc...) asparagine glycan. An intrachain disulfide couples Cys-876 to Cys-923. Residues Asn-967 and Asn-1063 are each glycosylated (N-linked (GlcNAc...) asparagine). 2 cysteine pairs are disulfide-bonded: Cys-1068–Cys-1115 and Cys-1164–Cys-1207. The interval 1290–1310 is disordered; it reads NQEGEPGTTTNSPSSASQEVS. The span at 1296–1309 shows a compositional bias: polar residues; sequence GTTTNSPSSASQEV.

In terms of assembly, interacts with INHA; the interaction is not confirmed by standard receptor binding assays. Interacts with ACVR1B; the interaction appears to be ligand-dependent as it is diminished by inhibin B and activin A. Interacts with ACVR2A, ACVR2B, ACVRL1 and BMPR1B. Interacts with HECTD1.

It localises to the membrane. Its subcellular location is the secreted. In terms of biological role, seems to be a coreceptor in inhibin signaling, but seems not to be a high-affinity inhibin receptor. Antagonizes activin A signaling in the presence or absence of inhibin B. Necessary to mediate a specific antagonistic effect of inhibin B on activin-stimulated transcription. In Mus musculus (Mouse), this protein is Immunoglobulin superfamily member 1 (Igsf1).